Reading from the N-terminus, the 491-residue chain is MAVHFPFDNSYAALPEGFFARVAPTPVATPRLIKLNRPLARELGLDPDRLDSPEGAEILAGKRIPEGADPIAMAYAGHQFGNFVPQLGDGRAILLGEVIDQNGVRRDIQLKGSGPTPYSRRGDGRAALGPVLREYIVSEAMAALDIPTTRSLAAVITGETVARETLLPGAVLTRIATSHIRVGTFQFFAARRNQDAVKALADHVIARHYPNAINTKQPYLTLLQEVIRRQAELVARWLLVGFIHGVMNTDNCSVAGETIDYGPCAFMDGYDPTKVFSSIDHTGRYAYGNQPRIALWNLTRLAECLVPLISDDQDAAIADAEAALGQFSEQFGQAYHAGLRAKLGLFTAQDGDRELIGDLLGAMIEQAADFTLTFRGLSDLAGNAETDSVRNLFAEPAAFDGWLGRWRQRTAAEPQDAATRRAAMQAVNPAFIPRNHRIQAVIEAAVERDDFAPFEELLAVLAHPYRDQPGFAGYAQPPQPHEQVLQTFCGT.

ATP contacts are provided by G88, G90, R91, K111, D123, G124, R174, and R181. D250 acts as the Proton acceptor in catalysis. Residues N251 and D260 each contribute to the Mg(2+) site. D260 is a binding site for ATP.

The protein belongs to the SELO family. Requires Mg(2+) as cofactor. Mn(2+) is required as a cofactor.

The enzyme catalyses L-seryl-[protein] + ATP = 3-O-(5'-adenylyl)-L-seryl-[protein] + diphosphate. It carries out the reaction L-threonyl-[protein] + ATP = 3-O-(5'-adenylyl)-L-threonyl-[protein] + diphosphate. It catalyses the reaction L-tyrosyl-[protein] + ATP = O-(5'-adenylyl)-L-tyrosyl-[protein] + diphosphate. The catalysed reaction is L-histidyl-[protein] + UTP = N(tele)-(5'-uridylyl)-L-histidyl-[protein] + diphosphate. The enzyme catalyses L-seryl-[protein] + UTP = O-(5'-uridylyl)-L-seryl-[protein] + diphosphate. It carries out the reaction L-tyrosyl-[protein] + UTP = O-(5'-uridylyl)-L-tyrosyl-[protein] + diphosphate. Its function is as follows. Nucleotidyltransferase involved in the post-translational modification of proteins. It can catalyze the addition of adenosine monophosphate (AMP) or uridine monophosphate (UMP) to a protein, resulting in modifications known as AMPylation and UMPylation. The polypeptide is Protein nucleotidyltransferase YdiU (Rhodopseudomonas palustris (strain BisB18)).